We begin with the raw amino-acid sequence, 402 residues long: E3 ubiquitin-protein ligase MARCHF11 (402 aa).

Residues 1–11 (MSFEGGHGGSR) are compositionally biased toward gly residues. The segment at 1–161 (MSFEGGHGGS…SGGGDQRAGH (161 aa)) is disordered. Residues 21–56 (EPPPQPPPPPPPTPPPGEPAPVPAAPRYLPPLPASP) are compositionally biased toward pro residues. Over residues 111 to 124 (EAAAAKGGPGESEA) the composition is skewed to low complexity. The RING-CH-type zinc-finger motif lies at 162 to 222 (QHQHHQPICK…ELCCYRYHVI (61 aa)). Zn(2+) is bound by residues C170, C173, C186, C188, H196, C199, C212, and C215. The next 2 membrane-spanning stretches (helical) occupy residues 245–265 (MIAV…LLWS) and 278–298 (ILFQ…IGLI). Residues 371–374 (YVLL) carry the YXXL motif motif. Positions 399-402 (VTSV) match the PDZ-binding motif.

Interacts (YXXL motif) with AP1M1. Interacts (via PDZ-binding motif) with LIN7A. Interacts with unidentified fucose glycoproteins.

The protein resides in the cytoplasmic vesicle membrane. The enzyme catalyses S-ubiquitinyl-[E2 ubiquitin-conjugating enzyme]-L-cysteine + [acceptor protein]-L-lysine = [E2 ubiquitin-conjugating enzyme]-L-cysteine + N(6)-ubiquitinyl-[acceptor protein]-L-lysine.. It participates in protein modification; protein ubiquitination. E3 ubiquitin-protein ligase that mediates polyubiquitination of CD4. E3 ubiquitin ligases accept ubiquitin from an E2 ubiquitin-conjugating enzyme in the form of a thioester and then directly transfer the ubiquitin to targeted substrates. May play a role in ubuquitin-dependent protein sorting in developmenting spermatids. In Homo sapiens (Human), this protein is E3 ubiquitin-protein ligase MARCHF11.